Here is a 365-residue protein sequence, read N- to C-terminus: Nicotinate N-methyltransferase 1 (365 aa).

Position 232 (Asp232) interacts with S-adenosyl-L-methionine.

Belongs to the class I-like SAM-binding methyltransferase superfamily. Cation-independent O-methyltransferase family.

The catalysed reaction is nicotinate + S-adenosyl-L-methionine = N-methylnicotinate + S-adenosyl-L-homocysteine. Its function is as follows. Involved in nicotinate detoxification in planta. Catalyzes the conversion of nicotinate to N-methylnicotinate, which is a detoxified form of endogenous nicotinate in planta. This chain is Nicotinate N-methyltransferase 1, found in Oryza sativa subsp. japonica (Rice).